Consider the following 382-residue polypeptide: MFLRAVVLTLALVAVTGARAEVSPDQVATVVWDYFSQLSNNAKEAVEHLQQSELTQQLNALFQDKLGQVNTYADNLQKKLVPFATELHERLTKDSEKLKEEIRKELEELRARLLPHANEVSQKIGDNVRELQQRLGPYADELRTQVNTHAEHLRRHLTSHAQRMEAVLRENVDNLQSSLTPYADEFKAKIDRNIEELKGHLTPYADELKVKIDQNVEELRRSLAPYAQDVQEKLNHQLEGLAFQMKKNAEELKAKITANADELRQRLAPVVEDVRGKLRDNAKGLQESLAQLNSHLDRQVEEFRHNMGPYGDTFNRALVQQVEELRQKLGSYAGGMEDHLSFLEKDLRDKVNSFFSTLKEKENQDMPLALPEQEQAPGPLES.

The signal sequence occupies residues 1–20 (MFLRAVVLTLALVAVTGARA). Repeat copies occupy residues 33 to 54 (DYFSQLSNNAKEAVEHLQQSEL), 60 to 81 (ALFQDKLGQVNTYADNLQKKLV), 82 to 103 (PFATELHERLTKDSEKLKEEIR), 115 to 136 (PHANEVSQKIGDNVRELQQRLG), 137 to 158 (PYADELRTQVNTHAEHLRRHLT), 159 to 180 (SHAQRMEAVLRENVDNLQSSLT), 181 to 202 (PYADEFKAKIDRNIEELKGHLT), 203 to 224 (PYADELKVKIDQNVEELRRSLA), 225 to 246 (PYAQDVQEKLNHQLEGLAFQMK), 247 to 268 (KNAEELKAKITANADELRQRLA), 269 to 286 (PVVEDVRGKLRDNAKGLQ), 287 to 308 (ESLAQLNSHLDRQVEEFRHNMG), and 309 to 330 (PYGDTFNRALVQQVEELRQKLG). The interval 33 to 330 (DYFSQLSNNA…QVEELRQKLG (298 aa)) is 13 X 22 AA approximate tandem repeats. A disordered region spans residues 362–382 (ENQDMPLALPEQEQAPGPLES).

This sequence belongs to the apolipoprotein A1/A4/E family. As to quaternary structure, homodimer.

It is found in the secreted. Its function is as follows. May have a role in chylomicrons and VLDL secretion and catabolism. Required for efficient activation of lipoprotein lipase by ApoC-II; potent activator of LCAT. Apoa-IV is a major component of HDL and chylomicrons. The protein is Apolipoprotein A-IV (APOA4) of Acinonyx jubatus (Cheetah).